Consider the following 91-residue polypeptide: Probable Fe(2+)-trafficking protein (91 aa).

The protein belongs to the Fe(2+)-trafficking protein family.

Functionally, could be a mediator in iron transactions between iron acquisition and iron-requiring processes, such as synthesis and/or repair of Fe-S clusters in biosynthetic enzymes. In Xanthomonas euvesicatoria pv. vesicatoria (strain 85-10) (Xanthomonas campestris pv. vesicatoria), this protein is Probable Fe(2+)-trafficking protein.